The following is a 142-amino-acid chain: Large ribosomal subunit protein uL13 (142 aa).

Belongs to the universal ribosomal protein uL13 family. In terms of assembly, part of the 50S ribosomal subunit.

Functionally, this protein is one of the early assembly proteins of the 50S ribosomal subunit, although it is not seen to bind rRNA by itself. It is important during the early stages of 50S assembly. This chain is Large ribosomal subunit protein uL13, found in Pelobacter propionicus (strain DSM 2379 / NBRC 103807 / OttBd1).